The sequence spans 499 residues: 6-hydroxynicotinate reductase (499 aa).

4Fe-4S ferredoxin-type domains lie at 1 to 29 and 31 to 61; these read MFKIDEEKCKKCRMCVKECPVHAVYYEKK and KGAIVEITEKCVECGICKRVCKFGAIENDAP. Residues C9, C12, C15, C19, C41, C44, C47, and C51 each contribute to the [4Fe-4S] cluster site.

As to quaternary structure, homotetramer. Requires an oxidized flavin as cofactor. It depends on [2Fe-2S] cluster as a cofactor. The cofactor is [4Fe-4S] cluster.

It catalyses the reaction 1,4,5,6-tetrahydro-6-oxonicotinate + oxidized 2[4Fe-4S]-[ferredoxin] = 6-hydroxynicotinate + reduced 2[4Fe-4S]-[ferredoxin] + 2 H(+). It functions in the pathway cofactor degradation; nicotinate degradation; propanoate and pyruvate from 6-hydroxynicotinate: step 1/8. Catalyzes the reversible reduction of 6-hydroxynicotinate to 6-oxo-1,4,5,6-tetrahydronicotinate. The sequence is that of 6-hydroxynicotinate reductase from Eubacterium barkeri (Clostridium barkeri).